We begin with the raw amino-acid sequence, 716 residues long: Segment polarity protein dishevelled homolog DVL-3 (716 aa).

The 82-residue stretch at 1-82 (MGETKIIYHL…RVVSWLVSAE (82 aa)) folds into the DIX domain. Position 27 is an omega-N-methylarginine (Arg-27). Phosphoserine occurs at positions 48 and 125. The disordered stretch occupies residues 85 to 235 (HPDPAPFCAD…VSRIERSSSF (151 aa)). Residues 142 to 156 (QRERPRRRDGPEHAT) show a composition bias toward basic and acidic residues. The segment covering 175–190 (SSSTLMSSELETTSFF) has biased composition (low complexity). The residue at position 192 (Ser-192) is a Phosphoserine. Residues 199-212 (SRFSSSTEQSSASR) show a composition bias toward low complexity. An Omega-N-methylarginine modification is found at Arg-212. Residues 213–226 (LMRRHKRRRRKQKV) are compositionally biased toward basic residues. One can recognise a PDZ domain in the interval 249 to 321 (TVTLNMEKYN…NDDAVRVLRE (73 aa)). Arg-271 bears the Asymmetric dimethylarginine; by PRMT1; alternate mark. Residues Arg-271 and Arg-342 each carry the symmetric dimethylarginine; by PRMT7; alternate modification. Residue Arg-342 is modified to Omega-N-methylarginine; alternate. The residue at position 346 (Thr-346) is a Phosphothreonine. Residues 422–496 (PESGLEVRDR…SEQCYYIFGD (75 aa)) enclose the DEP domain. The interval 546 to 691 (PYNPHPGFPE…PPGRDLASVP (146 aa)) is disordered. The span at 565–581 (ASSQHSEGSRSSGSNRS) shows a compositional bias: low complexity. Composition is skewed to basic and acidic residues over residues 582 to 595 (GSDR…KAGD) and 604 to 622 (ESDH…RAPS). Arg-614 carries the post-translational modification Symmetric dimethylarginine; by PRMT7. A compositionally biased stretch (pro residues) spans 653 to 682 (YGPPGVPPLYGPPMLMMPPPPAAMGPPGAP). Ser-697 carries the post-translational modification Phosphoserine. Arg-698 bears the Omega-N-methylarginine; alternate mark. Dimethylated arginine; alternate is present on Arg-698. Ser-700 bears the Phosphoserine mark.

The protein belongs to the DSH family. Interacts (via the PDZ domain) with the C-terminal regions of VANGL1 and VANGL2. Interacts (via the region containing both the PDZ and DEP domains) with LRRFIP2; the DIX domain may inhibit this interaction. Interacts with CYLD, CEP164 and DAB2. Interacts with DCDC2. Interacts with FOXK1 and FOXK2. Interacts with DAAM2. Ubiquitinated. Deubiquitinated by CYLD, which acts on 'Lys-63'-linked ubiquitin chains. In terms of processing, phosphorylated by CSNK1D. Post-translationally, arginine methylation may function as a switch in regulation of function in Wnt signaling.

Its subcellular location is the cytoplasm. Involved in the signal transduction pathway mediated by multiple Wnt genes. The chain is Segment polarity protein dishevelled homolog DVL-3 (DVL3) from Homo sapiens (Human).